Consider the following 357-residue polypeptide: Holliday junction branch migration complex subunit RuvB (357 aa).

The segment covering M1 to P15 has biased composition (low complexity). The tract at residues M1 to I30 is disordered. Residues D13–Y195 form a large ATPase domain (RuvB-L) region. ATP-binding positions include L34, R35, G76, K79, T80, T81, E142–F144, R185, Y195, and R232. T80 provides a ligand contact to Mg(2+). Positions N196–D266 are small ATPAse domain (RuvB-S). Residues P269–K357 form a head domain (RuvB-H) region. DNA is bound by residues R305, R324, and R329.

The protein belongs to the RuvB family. Homohexamer. Forms an RuvA(8)-RuvB(12)-Holliday junction (HJ) complex. HJ DNA is sandwiched between 2 RuvA tetramers; dsDNA enters through RuvA and exits via RuvB. An RuvB hexamer assembles on each DNA strand where it exits the tetramer. Each RuvB hexamer is contacted by two RuvA subunits (via domain III) on 2 adjacent RuvB subunits; this complex drives branch migration. In the full resolvosome a probable DNA-RuvA(4)-RuvB(12)-RuvC(2) complex forms which resolves the HJ.

It is found in the cytoplasm. It carries out the reaction ATP + H2O = ADP + phosphate + H(+). Its function is as follows. The RuvA-RuvB-RuvC complex processes Holliday junction (HJ) DNA during genetic recombination and DNA repair, while the RuvA-RuvB complex plays an important role in the rescue of blocked DNA replication forks via replication fork reversal (RFR). RuvA specifically binds to HJ cruciform DNA, conferring on it an open structure. The RuvB hexamer acts as an ATP-dependent pump, pulling dsDNA into and through the RuvAB complex. RuvB forms 2 homohexamers on either side of HJ DNA bound by 1 or 2 RuvA tetramers; 4 subunits per hexamer contact DNA at a time. Coordinated motions by a converter formed by DNA-disengaged RuvB subunits stimulates ATP hydrolysis and nucleotide exchange. Immobilization of the converter enables RuvB to convert the ATP-contained energy into a lever motion, pulling 2 nucleotides of DNA out of the RuvA tetramer per ATP hydrolyzed, thus driving DNA branch migration. The RuvB motors rotate together with the DNA substrate, which together with the progressing nucleotide cycle form the mechanistic basis for DNA recombination by continuous HJ branch migration. Branch migration allows RuvC to scan DNA until it finds its consensus sequence, where it cleaves and resolves cruciform DNA. This Bordetella bronchiseptica (strain ATCC BAA-588 / NCTC 13252 / RB50) (Alcaligenes bronchisepticus) protein is Holliday junction branch migration complex subunit RuvB.